A 144-amino-acid chain; its full sequence is Large ribosomal subunit protein bL31c (144 aa).

Residues 1–48 constitute a chloroplast transit peptide; that stretch reads MAVSLPNSFLQISPCVPSLQLRKPVMAAVKGGKQSVRRSSNTVVQITC.

Belongs to the bacterial ribosomal protein bL31 family. Type A subfamily. As to quaternary structure, part of the 50S ribosomal subunit.

The protein localises to the plastid. It localises to the chloroplast. Binds the 23S rRNA. This is Large ribosomal subunit protein bL31c (RPL31) from Arabidopsis thaliana (Mouse-ear cress).